We begin with the raw amino-acid sequence, 357 residues long: 4-hydroxymandelate oxidase (357 aa).

An FMN hydroxy acid dehydrogenase domain is found at 1-357 (MTYVSLADLE…RRLNTKLGVV (357 aa)). Q126 is a binding site for FMN. Y128 lines the a 2-oxocarboxylate pocket. T154 provides a ligand contact to FMN. An a 2-oxocarboxylate-binding site is contributed by R163. An FMN-binding site is contributed by K228. The active-site Proton acceptor is H252. R255 provides a ligand contact to a 2-oxocarboxylate. FMN is bound by residues 283–287 (DGGIR) and 306–307 (GR).

This sequence belongs to the FMN-dependent alpha-hydroxy acid dehydrogenase family. The cofactor is FMN.

It carries out the reaction (S)-4-hydroxymandelate + O2 = 4-hydroxyphenylglyoxylate + H2O2. The protein operates within antibiotic biosynthesis; vancomycin biosynthesis. Catalyzes the oxidation of p-hydroxymandelate to p-hydroxybenzoylformate in the biosynthesis of L-(4-hydroxyphenyl)glycine and L-(3,5-dihydroxyphenyl)glycine, 2 non-proteinogenic amino acids occurring in the vancomycin group of antibiotics. This chain is 4-hydroxymandelate oxidase (hmo), found in Amycolatopsis orientalis (Nocardia orientalis).